The chain runs to 572 residues: Proteinaceous RNase P 1, chloroplastic/mitochondrial (572 aa).

The N-terminal 70 residues, 1–70 (MLRLTCFTPS…SRHLCTLPLA (70 aa)), are a transit peptide targeting the chloroplast and mitochondrion. PPR repeat units follow at residues 96-130 (PEALLKQKLDMCSKKGDVLEALRLYDEARRNGVQL), 136-174 (NVLLYVCSLAEAATESSPNPGLSRGFDIFKQMIVDKVVP), 175-209 (NEATFTNGARLAVAKDDPEMAFDMVKQMKAFGIQP), and 210-244 (RLRSYGPALFGFCRKGDADKAYEVDAHMVESEVVP). The PRORP domain occupies 338-565 (MDENGVCKCC…DLQTSRQWLC (228 aa)). Zn(2+) is bound by residues Cys344 and Cys347. Mn(2+) is bound by residues Asp399, Asp474, Asp475, and Asp493. The Zn(2+) site is built by His548 and Cys565.

Belongs to the PPR family. P subfamily. Mg(2+) serves as cofactor. Mn(2+) is required as a cofactor.

It localises to the mitochondrion. The protein resides in the plastid. It is found in the chloroplast. The enzyme catalyses Endonucleolytic cleavage of RNA, removing 5'-extranucleotides from tRNA precursor.. In terms of biological role, endonuclease RNase P responsible for the 5' maturation of tRNA precursors. Preferentially cleaves at the unusual cleavage site, but also able to cleave at the classical cleavage site. Also involved in the maturation of mRNAs in mitochondria. The chain is Proteinaceous RNase P 1, chloroplastic/mitochondrial (PRORP1) from Arabidopsis thaliana (Mouse-ear cress).